The primary structure comprises 290 residues: Ribosomal RNA small subunit methyltransferase A (290 aa).

S-adenosyl-L-methionine contacts are provided by Asn27, Leu29, Gly54, Glu75, Asp100, and Asn125.

The protein belongs to the class I-like SAM-binding methyltransferase superfamily. rRNA adenine N(6)-methyltransferase family. RsmA subfamily.

The protein localises to the cytoplasm. The enzyme catalyses adenosine(1518)/adenosine(1519) in 16S rRNA + 4 S-adenosyl-L-methionine = N(6)-dimethyladenosine(1518)/N(6)-dimethyladenosine(1519) in 16S rRNA + 4 S-adenosyl-L-homocysteine + 4 H(+). Specifically dimethylates two adjacent adenosines (A1518 and A1519) in the loop of a conserved hairpin near the 3'-end of 16S rRNA in the 30S particle. May play a critical role in biogenesis of 30S subunits. This is Ribosomal RNA small subunit methyltransferase A from Streptococcus pneumoniae (strain 70585).